Consider the following 149-residue polypeptide: Transcriptional repressor NrdR (149 aa).

The segment at 3-34 (CPFCDTEETKVIDSRLVSDGYQVRRRRECGHC) is a zinc-finger region. An ATP-cone domain is found at 49 to 139 (PKIIKTDGTR…VYLSFDDIDQ (91 aa)).

Belongs to the NrdR family. It depends on Zn(2+) as a cofactor.

Its function is as follows. Negatively regulates transcription of bacterial ribonucleotide reductase nrd genes and operons by binding to NrdR-boxes. This chain is Transcriptional repressor NrdR, found in Haemophilus influenzae (strain 86-028NP).